Consider the following 182-residue polypeptide: Ribosomal RNA small subunit methyltransferase G (182 aa).

Residues Gly-58, Phe-63, 109–110 (IE), and Arg-123 contribute to the S-adenosyl-L-methionine site.

It belongs to the methyltransferase superfamily. RNA methyltransferase RsmG family.

Its subcellular location is the cytoplasm. The catalysed reaction is guanosine(527) in 16S rRNA + S-adenosyl-L-methionine = N(7)-methylguanosine(527) in 16S rRNA + S-adenosyl-L-homocysteine. Its function is as follows. Specifically methylates the N7 position of guanine in position 527 of 16S rRNA. This Campylobacter fetus subsp. fetus (strain 82-40) protein is Ribosomal RNA small subunit methyltransferase G.